Here is a 565-residue protein sequence, read N- to C-terminus: Frizzled-2 (565 aa).

The N-terminal stretch at 1–23 (MRPRSALPRLLLPLLLLPAAGPA) is a signal peptide. At 24–247 (QFHGEKGISI…QEETRFARLW (224 aa)) the chain is on the extracellular side. The 120-residue stretch at 34–153 (PDHGFCQPIS…HGAEQICVGQ (120 aa)) folds into the FZ domain. Disulfide bonds link C39–C100, C47–C93, C84–C121, C110–C150, and C114–C138. A glycan (N-linked (GlcNAc...) asparagine) is linked at N53. The N-linked (GlcNAc...) asparagine glycan is linked to N154. Positions 160–189 (APALLTTAPPPGLQPGAGGTPGGPGGGGAP) are disordered. The segment covering 174-188 (PGAGGTPGGPGGGGA) has biased composition (gly residues). The helical transmembrane segment at 248–268 (ILTWSVLCCASTFFTVTTYLV) threads the bilayer. Over 269–279 (DMQRFRYPERP) the chain is Cytoplasmic. A helical transmembrane segment spans residues 280-300 (IIFLSGCYTMVSVAYIAGFVL). Residues 301–327 (QERVVCNERFSEDGYRTVVQGTKKEGC) lie on the Extracellular side of the membrane. Residues 328-348 (TILFMMLYFFSMASSIWWVIL) form a helical membrane-spanning segment. Residues 349–370 (SLTWFLAAGMKWGHEAIEANSQ) lie on the Cytoplasmic side of the membrane. A helical membrane pass occupies residues 371–391 (YFHLAAWAVPAVKTITILAMG). At 392-414 (QIDGDLLSGVCFVGLNSLDPLRG) the chain is on the extracellular side. Residues 415 to 435 (FVLAPLFVYLFIGTSFLLAGF) traverse the membrane as a helical segment. Residues 436–461 (VSLFRIRTIMKHDGTKTEKLERLMVR) lie on the Cytoplasmic side of the membrane. Residues 462-482 (IGVFSVLYTVPATIVIACYFY) traverse the membrane as a helical segment. The Extracellular portion of the chain corresponds to 483–519 (EQAFREHWERSWVSQHCKSLAIPCPAHYTPRMSPDFT). The chain crosses the membrane as a helical span at residues 520–540 (VYMIKYLMTLIVGITSGFWIW). Over 541 to 565 (SGKTLHSWRKFYTRLTNSRHGETTV) the chain is Cytoplasmic. The Lys-Thr-X-X-X-Trp motif, mediates interaction with the PDZ domain of Dvl family members motif lies at 543–548 (KTLHSW). A PDZ-binding motif is present at residues 563–565 (TTV).

This sequence belongs to the G-protein coupled receptor Fz/Smo family. In terms of assembly, (Microbial infection) Interacts with C.difficile toxin TcdB; frizzled receptors constitute the major host receptors for TcdB in the colonic epithelium. Post-translationally, ubiquitinated by ZNRF3, leading to its degradation by the proteasome. In terms of tissue distribution, widely expressed. In the adult, mainly found in heart, placenta, skeletal muscle, lung, kidney, pancreas, prostate, testis, ovary and colon. In the fetus, expressed in brain, lung and kidney. Low levels in fetal liver.

It is found in the membrane. The protein resides in the cell membrane. Receptor for Wnt proteins. Most of frizzled receptors are coupled to the beta-catenin canonical signaling pathway, which leads to the activation of disheveled proteins, inhibition of GSK-3 kinase, nuclear accumulation of beta-catenin and activation of Wnt target genes. A second signaling pathway involving PKC and calcium fluxes has been seen for some family members, but it is not yet clear if it represents a distinct pathway or if it can be integrated in the canonical pathway, as PKC seems to be required for Wnt-mediated inactivation of GSK-3 kinase. Both pathways seem to involve interactions with G-proteins. May be involved in transduction and intercellular transmission of polarity information during tissue morphogenesis and/or in differentiated tissues. Its function is as follows. (Microbial infection) Acts as a receptor for C.difficile toxin TcdB in the colonic epithelium. TcdB occupies the binding site for Wnt-adducted palmitoleate in frizzled receptors and TcdB-binding prevents Wnt-binding and downstream Wnt signaling. This chain is Frizzled-2 (FZD2), found in Homo sapiens (Human).